The sequence spans 643 residues: DNA-directed RNA polymerase subunit beta' (643 aa).

The Zn(2+) site is built by C83, C85, C98, and C101. Residues D480, D482, and D484 each coordinate Mg(2+).

This sequence belongs to the RNA polymerase beta' chain family. RpoC1 subfamily. In terms of assembly, in plastids the minimal PEP RNA polymerase catalytic core is composed of four subunits: alpha, beta, beta', and beta''. When a (nuclear-encoded) sigma factor is associated with the core the holoenzyme is formed, which can initiate transcription. Mg(2+) is required as a cofactor. Zn(2+) serves as cofactor.

The protein resides in the plastid. Its subcellular location is the organellar chromatophore. The enzyme catalyses RNA(n) + a ribonucleoside 5'-triphosphate = RNA(n+1) + diphosphate. Its function is as follows. DNA-dependent RNA polymerase catalyzes the transcription of DNA into RNA using the four ribonucleoside triphosphates as substrates. This chain is DNA-directed RNA polymerase subunit beta', found in Paulinella chromatophora.